The primary structure comprises 103 residues: Cysteine-rich and transmembrane domain-containing protein 1 (103 aa).

The segment covering Met1–Gly45 has biased composition (pro residues). The disordered stretch occupies residues Met1–Lys66. Over residues Gly46–Gly56 the composition is skewed to low complexity. Residues Leu80–Cys97 form a helical membrane-spanning segment.

This sequence belongs to the CYSTM1 family.

The protein resides in the membrane. The sequence is that of Cysteine-rich and transmembrane domain-containing protein 1 (CYSTM1) from Bos taurus (Bovine).